The primary structure comprises 241 residues: Orotidine 5'-phosphate decarboxylase (241 aa).

Residues D15, K36, 63–72 (DLKFHDIPNT), T127, R189, Q198, G218, and R219 each bind substrate. Residue K65 is the Proton donor of the active site.

Belongs to the OMP decarboxylase family. Type 1 subfamily. In terms of assembly, homodimer.

It carries out the reaction orotidine 5'-phosphate + H(+) = UMP + CO2. It functions in the pathway pyrimidine metabolism; UMP biosynthesis via de novo pathway; UMP from orotate: step 2/2. In terms of biological role, catalyzes the decarboxylation of orotidine 5'-monophosphate (OMP) to uridine 5'-monophosphate (UMP). This chain is Orotidine 5'-phosphate decarboxylase, found in Prochlorococcus marinus (strain MIT 9211).